Consider the following 708-residue polypeptide: RNA-directed RNA polymerase catalytic subunit (708 aa).

In terms of domain architecture, RdRp catalytic spans 281-467 (RIKEIGMKNQ…GLNVSQKKSF (187 aa)).

As to quaternary structure, the RNA polymerase is composed of three subunits: PB1, PB2 and PA.

The catalysed reaction is RNA(n) + a ribonucleoside 5'-triphosphate = RNA(n+1) + diphosphate. Its function is as follows. RNA-dependent RNA polymerase which is responsible for replication and transcription of virus segments. Binds the promoter sequence of the encapsidated viral RNA. Displays an endonuclease activity involved in cap-stealing. Cleaves cellular pre-mRNA to generate primers for viral transcription. This Infectious salmon anemia virus (isolate Atlantic salmon/Norway/810/9/99) (ISAV) protein is RNA-directed RNA polymerase catalytic subunit.